The chain runs to 508 residues: Light-independent protochlorophyllide reductase subunit B (508 aa).

Asp36 contacts [4Fe-4S] cluster. The Proton donor role is filled by Asp294. 429-430 (GM) lines the substrate pocket.

The protein belongs to the ChlB/BchB/BchZ family. Protochlorophyllide reductase is composed of three subunits; ChlL, ChlN and ChlB. Forms a heterotetramer of two ChlB and two ChlN subunits. [4Fe-4S] cluster is required as a cofactor.

It carries out the reaction chlorophyllide a + oxidized 2[4Fe-4S]-[ferredoxin] + 2 ADP + 2 phosphate = protochlorophyllide a + reduced 2[4Fe-4S]-[ferredoxin] + 2 ATP + 2 H2O. The protein operates within porphyrin-containing compound metabolism; chlorophyll biosynthesis (light-independent). In terms of biological role, component of the dark-operative protochlorophyllide reductase (DPOR) that uses Mg-ATP and reduced ferredoxin to reduce ring D of protochlorophyllide (Pchlide) to form chlorophyllide a (Chlide). This reaction is light-independent. The NB-protein (ChlN-ChlB) is the catalytic component of the complex. In Crocosphaera subtropica (strain ATCC 51142 / BH68) (Cyanothece sp. (strain ATCC 51142)), this protein is Light-independent protochlorophyllide reductase subunit B.